Reading from the N-terminus, the 316-residue chain is Cuticle collagen 12 (316 aa).

Residues 1 to 36 form the signal peptide; it reads MTEDPKQIAQETESLRKVAFFGIAVSTIATLTAIIA. Low complexity-rich tracts occupy residues 127-157 and 183-204; these read SGAA…PGQD and APGQ…GAAL. The tract at residues 127–316 is disordered; the sequence is SGAAGPAGSP…CPPPRTAPGY (190 aa). Triple-helical region stretches follow at residues 128-157, 176-202, 206-235, 240-266, and 269-304; these read GAAG…PGQD, GPPG…SGGA, GPPG…PGQV, GTPG…AGSS, and GGPG…EGAC. The segment covering 205–217 has biased composition (pro residues); the sequence is PGPPGPAGPPGPA. Residues 219–234 are compositionally biased toward low complexity; it reads QPGSNGNAGAPGAPGQ. Over residues 241 to 251 the composition is skewed to pro residues; sequence TPGPAGPPGSP. Composition is skewed to low complexity over residues 256–266 and 276–295; these read APGQPGQAGSS and DAGA…PGQD. The segment covering 307-316 has biased composition (pro residues); it reads CPPPRTAPGY.

It belongs to the cuticular collagen family. Collagen polypeptide chains are complexed within the cuticle by disulfide bonds and other types of covalent cross-links.

Functionally, nematode cuticles are composed largely of collagen-like proteins. The cuticle functions both as an exoskeleton and as a barrier to protect the worm from its environment. The sequence is that of Cuticle collagen 12 (col-12) from Caenorhabditis elegans.